We begin with the raw amino-acid sequence, 219 residues long: ADP-sugar pyrophosphatase (219 aa).

Position 1 is an N-acetylmethionine (methionine 1). Serine 3 and serine 10 each carry phosphoserine. Substrate is bound at residue tryptophan 28. Lysine 42 participates in a covalent cross-link: Glycyl lysine isopeptide (Lys-Gly) (interchain with G-Cter in SUMO2). A Phosphothreonine modification is found at threonine 45. Residues 46-47 and arginine 51 each bind substrate; that span reads WE. The 141-residue stretch at 57 to 197 folds into the Nudix hydrolase domain; sequence QTADGVAVIP…EEHLTVDARV (141 aa). Tyrosine 74 carries the phosphotyrosine modification. Residue arginine 84 coordinates substrate. Alanine 96 is a Mg(2+) binding site. A Nudix box motif is present at residues 97-118; sequence GLIDDGETPEAAALRELEEETG. Leucine 98 contacts substrate. 2 residues coordinate Mg(2+): glutamate 112 and glutamate 116. Position 133 (aspartate 133) interacts with substrate. Glutamate 166 lines the Mg(2+) pocket. Residues lysine 210 and lysine 218 each carry the N6-acetyllysine modification.

This sequence belongs to the Nudix hydrolase family. In terms of assembly, homodimer. Interacts with PARG. Mg(2+) serves as cofactor. In terms of processing, phosphorylation at Thr-45 is required for homodimer stability; dephosphorylation results in destabilization of the homodimer. Dephosphorylation at Thr-45 promotes the ATP-synthesis activity. As to expression, widely expressed. Most abundant in liver.

Its subcellular location is the nucleus. It carries out the reaction D-ribose 5-phosphate + ATP + H(+) = ADP-D-ribose + diphosphate. It catalyses the reaction ADP-D-ribose + H2O = D-ribose 5-phosphate + AMP + 2 H(+). The catalysed reaction is 8-oxo-dGDP + H2O = 8-oxo-dGMP + phosphate + H(+). Its function is as follows. Enzyme that can either act as an ADP-sugar pyrophosphatase in absence of diphosphate or catalyze the synthesis of ATP in presence of diphosphate. In absence of diphosphate, hydrolyzes with similar activities various modified nucleoside diphosphates such as ADP-ribose, ADP-mannose, ADP-glucose, 8-oxo-GDP and 8-oxo-dGDP. Can also hydrolyze other nucleotide sugars with low activity. In presence of diphosphate, mediates the synthesis of ATP in the nucleus by catalyzing the conversion of ADP-ribose to ATP and ribose 5-phosphate. Nuclear ATP synthesis takes place when dephosphorylated at Thr-45. Nuclear ATP generation is required for extensive chromatin remodeling events that are energy-consuming. Does not play a role in U8 snoRNA decapping activity. Binds U8 snoRNA. In Homo sapiens (Human), this protein is ADP-sugar pyrophosphatase (NUDT5).